The chain runs to 236 residues: Phosphoglycolate phosphatase (236 aa).

Aspartate 23 serves as the catalytic Nucleophile. Positions 23 and 25 each coordinate Mg(2+). Substrate is bound at residue lysine 162. Residues aspartate 185 and aspartate 189 each contribute to the Mg(2+) site.

The protein belongs to the archaeal SPP-like hydrolase family. It depends on Mg(2+) as a cofactor.

The enzyme catalyses 2-phosphoglycolate + H2O = glycolate + phosphate. Catalyzes the dephosphorylation of 2-phosphoglycolate. This Picrophilus torridus (strain ATCC 700027 / DSM 9790 / JCM 10055 / NBRC 100828 / KAW 2/3) protein is Phosphoglycolate phosphatase.